The chain runs to 251 residues: Phosphoribosylaminoimidazole-succinocarboxamide synthase (251 aa).

Belongs to the SAICAR synthetase family.

The enzyme catalyses 5-amino-1-(5-phospho-D-ribosyl)imidazole-4-carboxylate + L-aspartate + ATP = (2S)-2-[5-amino-1-(5-phospho-beta-D-ribosyl)imidazole-4-carboxamido]succinate + ADP + phosphate + 2 H(+). Its pathway is purine metabolism; IMP biosynthesis via de novo pathway; 5-amino-1-(5-phospho-D-ribosyl)imidazole-4-carboxamide from 5-amino-1-(5-phospho-D-ribosyl)imidazole-4-carboxylate: step 1/2. The protein is Phosphoribosylaminoimidazole-succinocarboxamide synthase of Phenylobacterium zucineum (strain HLK1).